The chain runs to 425 residues: Amidase 1 (425 aa).

Position 2 is an N-acetylalanine (Ala2). Residues Lys36 and Ser113 each act as charge relay system in the active site. Ser137 functions as the Acyl-ester intermediate in the catalytic mechanism.

This sequence belongs to the amidase family. In terms of tissue distribution, expressed in cotyledons, leaves and flower buds. Lower levels in roots, stems and siliques.

The protein resides in the cytoplasm. Its subcellular location is the nucleus. It is found in the nucleoplasm. The enzyme catalyses a monocarboxylic acid amide + H2O = a monocarboxylate + NH4(+). The catalysed reaction is indole-3-acetamide + H2O = (indol-3-yl)acetate + NH4(+). It carries out the reaction 2-phenylacetamide + H2O = 2-phenylacetate + NH4(+). It catalyses the reaction L-asparagine + H2O = L-aspartate + NH4(+). The enzyme catalyses 1-naphthaleneacetamide + H2O = 1-naphthaleneacetate + NH4(+). With respect to regulation, inhibited by phenylmethylsulfonyl fluoride (PMSF). Amidase involved in auxin biosynthesis. Converts indole-3-acetamide to indole-3-acetate. Converts phenyl-2-acetamide (PAM) to phenyl-2-acetate. Substrate preference is PAM &gt; IAM. Can also use L-asparagine and 1-naphtalene-acetamide as substrates, but not indole-3-acetonitrile or indole-3-acetyl-L-aspartic acid. The polypeptide is Amidase 1 (Arabidopsis thaliana (Mouse-ear cress)).